A 262-amino-acid polypeptide reads, in one-letter code: MRREKGFQVPTDGTVIYVPPGIQETRLATRSLAWVDCCRVALHTYGAVGWQLAGLTALLSAFCYAAPATWFHHSRLCLTESSPSLVFVIPVTSVIFIHCYETSHPSNIGVLLFYTLLHVPPLIVICLCLDGTLVISAALFTLLAFLSCTGVALLAPERTVRRQIVVVHALITLTFTAIVVVILRRGWSWCFKIVLSFSVLITCLAVSHFHEAALAVRYETPLERALLAAVKVFLSLVFTLLMVLRIMTLRTFLQTYFSSDKL.

Helical transmembrane passes span 46-66, 77-97, 108-128, 133-153, 163-183, 186-206, and 226-246; these read GAVGWQLAGLTALLSAFCYAA, CLTESSPSLVFVIPVTSVIFI, IGVLLFYTLLHVPPLIVICLC, LVISAALFTLLAFLSCTGVAL, QIVVVHALITLTFTAIVVVIL, GWSWCFKIVLSFSVLITCLAV, and LLAAVKVFLSLVFTLLMVLRI.

Belongs to the cytomegalovirus US12 family.

It is found in the membrane. This is an uncharacterized protein from Homo sapiens (Human).